The chain runs to 580 residues: Cleavage stimulation factor subunit 2 (580 aa).

Position 14 is a phosphoserine (Ser14). The 79-residue stretch at 16 to 94 (RSVFVGNIPY…RALRVDNAAS (79 aa)) folds into the RRM domain. Positions 108–248 (APVIESPYGE…VNGAPPMMQA (141 aa)) are interactions with CSTF3 and SYMPK. Lys189 is covalently cross-linked (Glycyl lysine isopeptide (Lys-Gly) (interchain with G-Cter in SUMO2)). Residue Arg308 is modified to Omega-N-methylarginine. Disordered regions lie at residues 311–331 (LPTNVPTPRGLLGDAPNDPRG) and 347–414 (LGPP…RGLD). Composition is skewed to basic and acidic residues over residues 363-376 (PGHEGRGPPPHDMR) and 405-414 (RGGRDPRGLD). Residues 413–417 (LDARG) form a 1; approximate repeat. The 12 X 5 AA tandem repeats of M-E-A-R-[AG] stretch occupies residues 413 to 472 (LDARGMEARAMEARGLDARGLEARAMEARAMEARAMEARAMEARAMEARAMEARGMDTRG). Tandem repeats lie at residues 418–422 (MEARA) and 423–427 (MEARG). The stretch at 428-432 (LDARG) is one 4; approximate repeat. Residues 433 to 437 (LEARA) form a 5; approximate repeat. 6 tandem repeats follow at residues 438-442 (MEARA), 443-447 (MEARA), 448-452 (MEARA), 453-457 (MEARA), 458-462 (MEARA), and 463-467 (MEARG). Residues 468 to 472 (MDTRG) form a 12; approximate repeat. Omega-N-methylarginine occurs at positions 471 and 478. The interval 512–536 (MQGASMQGGSQPGGFSPGQSQVTPQ) is disordered. The tract at residues 517–580 (MQGGSQPGGF…EQIQKSTGAP (64 aa)) is interaction with RPO2TC1. Phosphoserine is present on residues Ser521 and Ser527.

The CSTF complex is composed of CSTF1 (50 kDa subunit), CSTF2 (64 kDa subunit) and CSTF3 (77 kDa subunit). CSTF2 directly interacts with CSTF3, SYMPK and RPO2TC1. Interacts with HSF1 in heat-stressed cells. Interacts with CPSF2, CPSF3 and FIP1L1. Interacts with DDX1. In terms of tissue distribution, expressed in most somatic cell types (at protein level). Highly expressed in testis, except in meiotic spermatocytes.

Its subcellular location is the nucleus. Functionally, one of the multiple factors required for polyadenylation and 3'-end cleavage of mammalian pre-mRNAs. This subunit is directly involved in the binding to pre-mRNAs. The polypeptide is Cleavage stimulation factor subunit 2 (Cstf2) (Mus musculus (Mouse)).